Consider the following 537-residue polypeptide: Cytoplasmic 60S subunit biogenesis factor REI1 homolog (537 aa).

2 consecutive C2H2-type zinc fingers follow at residues 18 to 42 (YTCN…SDWH) and 83 to 107 (KTCE…STKH). Disordered regions lie at residues 101 to 151 (HLSS…AEEE) and 163 to 204 (SIHD…PEAL). Positions 192–204 (EETPTTTPKPEAL) are enriched in low complexity. The C2H2-type 3 zinc-finger motif lies at 260 to 284 (NECLTCGKMKVNVFAIQTHMRDKSH). The span at 312–322 (DWETEEEDKGE) shows a compositional bias: acidic residues. Disordered stretches follow at residues 312-361 (DWET…ASSL) and 382-401 (GKHP…ADGI). A compositionally biased stretch (basic and acidic residues) spans 323–339 (EDGGVRLGAKRESKVVD). Over residues 340-356 (ENGDEVMEDEEGWETDS) the composition is skewed to acidic residues. Positions 383-395 (KHPHHSRENKKAH) are enriched in basic residues.

It belongs to the REI1 family. In terms of assembly, associates with nascent pre-60S particles that have not yet entered the translating pool, and is released from mature 60S subunits.

The protein localises to the cytoplasm. Its function is as follows. Pre-60S-associated factor involved in the cytoplasmic maturation of the 60S subunit. Involved in the dissociation and recycling of other late pre-60S factors before newly synthesized large ribosomal subunits enter translation. This Chaetomium thermophilum (strain DSM 1495 / CBS 144.50 / IMI 039719) (Thermochaetoides thermophila) protein is Cytoplasmic 60S subunit biogenesis factor REI1 homolog.